Here is a 159-residue protein sequence, read N- to C-terminus: Ribosomal RNA large subunit methyltransferase H (159 aa).

S-adenosyl-L-methionine is bound by residues Leu-76, Gly-108, and 127–132 (FSKMTF).

Belongs to the RNA methyltransferase RlmH family. Homodimer.

Its subcellular location is the cytoplasm. It carries out the reaction pseudouridine(1915) in 23S rRNA + S-adenosyl-L-methionine = N(3)-methylpseudouridine(1915) in 23S rRNA + S-adenosyl-L-homocysteine + H(+). Functionally, specifically methylates the pseudouridine at position 1915 (m3Psi1915) in 23S rRNA. The protein is Ribosomal RNA large subunit methyltransferase H of Clostridium botulinum (strain 657 / Type Ba4).